Reading from the N-terminus, the 464-residue chain is Asparagine--tRNA ligase (464 aa).

The protein belongs to the class-II aminoacyl-tRNA synthetase family. As to quaternary structure, homodimer.

The protein localises to the cytoplasm. The catalysed reaction is tRNA(Asn) + L-asparagine + ATP = L-asparaginyl-tRNA(Asn) + AMP + diphosphate + H(+). This chain is Asparagine--tRNA ligase, found in Xanthomonas axonopodis pv. citri (strain 306).